The following is a 113-amino-acid chain: C-X-C motif chemokine 6 (113 aa).

The signal sequence occupies residues 1–36; sequence MSLLPSRAARVPGPSSSLCALLALLLLTPPGPLVSA. Intrachain disulfides connect C48–C74 and C50–C90.

This sequence belongs to the intercrine alpha (chemokine CxC) family.

The protein localises to the secreted. Functionally, chemotactic for neutrophil granulocytes. Signals through binding and activation of its receptors (CXCR1 and CXCR2). In addition to its chemotactic and angiogenic properties, it has strong antibacterial activity against Gram-positive and Gram-negative bacteria (90-fold-higher when compared to CXCL5 and CXCL7). The protein is C-X-C motif chemokine 6 (CXCL6) of Equus caballus (Horse).